Reading from the N-terminus, the 177-residue chain is Large ribosomal subunit protein uL6 (177 aa).

The protein belongs to the universal ribosomal protein uL6 family. In terms of assembly, part of the 50S ribosomal subunit.

In terms of biological role, this protein binds to the 23S rRNA, and is important in its secondary structure. It is located near the subunit interface in the base of the L7/L12 stalk, and near the tRNA binding site of the peptidyltransferase center. The sequence is that of Large ribosomal subunit protein uL6 from Histophilus somni (strain 129Pt) (Haemophilus somnus).